We begin with the raw amino-acid sequence, 171 residues long: 3-hydroxydecanoyl-[acyl-carrier-protein] dehydratase (171 aa).

Residue H70 is part of the active site.

It belongs to the thioester dehydratase family. FabA subfamily. As to quaternary structure, homodimer.

Its subcellular location is the cytoplasm. It carries out the reaction a (3R)-hydroxyacyl-[ACP] = a (2E)-enoyl-[ACP] + H2O. The enzyme catalyses (3R)-hydroxydecanoyl-[ACP] = (2E)-decenoyl-[ACP] + H2O. The catalysed reaction is (2E)-decenoyl-[ACP] = (3Z)-decenoyl-[ACP]. The protein operates within lipid metabolism; fatty acid biosynthesis. Its function is as follows. Necessary for the introduction of cis unsaturation into fatty acids. Catalyzes the dehydration of (3R)-3-hydroxydecanoyl-ACP to E-(2)-decenoyl-ACP and then its isomerization to Z-(3)-decenoyl-ACP. Can catalyze the dehydratase reaction for beta-hydroxyacyl-ACPs with saturated chain lengths up to 16:0, being most active on intermediate chain length. The chain is 3-hydroxydecanoyl-[acyl-carrier-protein] dehydratase from Shewanella oneidensis (strain ATCC 700550 / JCM 31522 / CIP 106686 / LMG 19005 / NCIMB 14063 / MR-1).